Reading from the N-terminus, the 465-residue chain is Argininosuccinate lyase (465 aa).

The protein belongs to the lyase 1 family. Argininosuccinate lyase subfamily.

It is found in the cytoplasm. It carries out the reaction 2-(N(omega)-L-arginino)succinate = fumarate + L-arginine. It functions in the pathway amino-acid biosynthesis; L-arginine biosynthesis; L-arginine from L-ornithine and carbamoyl phosphate: step 3/3. The chain is Argininosuccinate lyase from Desulfatibacillum aliphaticivorans.